A 311-amino-acid chain; its full sequence is Aspartate carbamoyltransferase catalytic subunit (311 aa).

Arg55 and Thr56 together coordinate carbamoyl phosphate. Lys84 is an L-aspartate binding site. Carbamoyl phosphate contacts are provided by Arg105, His133, and Gln136. Residues Arg166 and Arg229 each coordinate L-aspartate. 2 residues coordinate carbamoyl phosphate: Leu268 and Pro269.

Belongs to the aspartate/ornithine carbamoyltransferase superfamily. ATCase family. In terms of assembly, heterododecamer (2C3:3R2) of six catalytic PyrB chains organized as two trimers (C3), and six regulatory PyrI chains organized as three dimers (R2).

The catalysed reaction is carbamoyl phosphate + L-aspartate = N-carbamoyl-L-aspartate + phosphate + H(+). Its pathway is pyrimidine metabolism; UMP biosynthesis via de novo pathway; (S)-dihydroorotate from bicarbonate: step 2/3. Its function is as follows. Catalyzes the condensation of carbamoyl phosphate and aspartate to form carbamoyl aspartate and inorganic phosphate, the committed step in the de novo pyrimidine nucleotide biosynthesis pathway. The polypeptide is Aspartate carbamoyltransferase catalytic subunit (Alkaliphilus metalliredigens (strain QYMF)).